The sequence spans 541 residues: Apolipoprotein N-acyltransferase (541 aa).

The next 6 helical transmembrane spans lie at 21-41 (LSGF…WYSL), 54-74 (LFVS…SWML), 82-102 (LIYL…SGFS), 116-136 (FLWS…YGIF), 157-177 (FGGF…NMSF), and 189-209 (MLWV…YEYL). In terms of domain architecture, CN hydrolase spans 220-499 (LRVAVVQPAH…SGVLETSLPL (280 aa)). E264 acts as the Proton acceptor in catalysis. K349 is an active-site residue. C404 acts as the Nucleophile in catalysis. The chain crosses the membrane as a helical span at residues 512 to 532 (YPMILIAFCAVSYLGGGFLGY).

Belongs to the CN hydrolase family. Apolipoprotein N-acyltransferase subfamily.

Its subcellular location is the cell inner membrane. It carries out the reaction N-terminal S-1,2-diacyl-sn-glyceryl-L-cysteinyl-[lipoprotein] + a glycerophospholipid = N-acyl-S-1,2-diacyl-sn-glyceryl-L-cysteinyl-[lipoprotein] + a 2-acyl-sn-glycero-3-phospholipid + H(+). The protein operates within protein modification; lipoprotein biosynthesis (N-acyl transfer). Catalyzes the phospholipid dependent N-acylation of the N-terminal cysteine of apolipoprotein, the last step in lipoprotein maturation. This is Apolipoprotein N-acyltransferase from Chlamydia pneumoniae (Chlamydophila pneumoniae).